The primary structure comprises 392 residues: 8-amino-7-oxononanoate synthase (392 aa).

Position 19 (R19) interacts with substrate. A pyridoxal 5'-phosphate-binding site is contributed by 106 to 107 (GY). H131 is a binding site for substrate. Pyridoxal 5'-phosphate contacts are provided by S176, H204, and T233. K236 is modified (N6-(pyridoxal phosphate)lysine). T350 is a substrate binding site.

The protein belongs to the class-II pyridoxal-phosphate-dependent aminotransferase family. BioF subfamily. In terms of assembly, homodimer. Pyridoxal 5'-phosphate serves as cofactor.

The catalysed reaction is 6-carboxyhexanoyl-[ACP] + L-alanine + H(+) = (8S)-8-amino-7-oxononanoate + holo-[ACP] + CO2. The protein operates within cofactor biosynthesis; biotin biosynthesis. Functionally, catalyzes the decarboxylative condensation of pimeloyl-[acyl-carrier protein] and L-alanine to produce 8-amino-7-oxononanoate (AON), [acyl-carrier protein], and carbon dioxide. In Stutzerimonas stutzeri (strain A1501) (Pseudomonas stutzeri), this protein is 8-amino-7-oxononanoate synthase.